The sequence spans 264 residues: Thiazole synthase (264 aa).

K106 serves as the catalytic Schiff-base intermediate with DXP. 1-deoxy-D-xylulose 5-phosphate contacts are provided by residues G167, 193–194 (AG), and 215–216 (NT).

It belongs to the ThiG family. Homotetramer. Forms heterodimers with either ThiH or ThiS.

The protein localises to the cytoplasm. The catalysed reaction is [ThiS sulfur-carrier protein]-C-terminal-Gly-aminoethanethioate + 2-iminoacetate + 1-deoxy-D-xylulose 5-phosphate = [ThiS sulfur-carrier protein]-C-terminal Gly-Gly + 2-[(2R,5Z)-2-carboxy-4-methylthiazol-5(2H)-ylidene]ethyl phosphate + 2 H2O + H(+). It participates in cofactor biosynthesis; thiamine diphosphate biosynthesis. Its function is as follows. Catalyzes the rearrangement of 1-deoxy-D-xylulose 5-phosphate (DXP) to produce the thiazole phosphate moiety of thiamine. Sulfur is provided by the thiocarboxylate moiety of the carrier protein ThiS. In vitro, sulfur can be provided by H(2)S. This is Thiazole synthase from Xanthomonas oryzae pv. oryzae (strain MAFF 311018).